The primary structure comprises 411 residues: Dihydrolipoyllysine-residue succinyltransferase component of 2-oxoglutarate dehydrogenase complex (411 aa).

Residues 2–77 (TTEIRVPTLG…EVNALLGAVE (76 aa)) enclose the Lipoyl-binding domain. Residue Lys-43 is modified to N6-lipoyllysine. Residues 82–100 (SVAKSPSSSETSVSAAPSE) show a composition bias toward low complexity. Residues 82–115 (SVAKSPSSSETSVSAAPSELEQSSSSNTMPPAPS) are disordered. Polar residues predominate over residues 101–110 (LEQSSSSNTM). The region spanning 111 to 148 (PPAPSAAKLMAENNIAKSDILGSGKRGQILKEDVLNVL) is the Peripheral subunit-binding (PSBD) domain. Residues His-382 and Asp-386 contribute to the active site.

This sequence belongs to the 2-oxoacid dehydrogenase family. As to quaternary structure, forms a 24-polypeptide structural core with octahedral symmetry. Part of the 2-oxoglutarate dehydrogenase (OGDH) complex composed of E1 (2-oxoglutarate dehydrogenase), E2 (dihydrolipoamide succinyltransferase) and E3 (dihydrolipoamide dehydrogenase); the complex contains multiple copies of the three enzymatic components (E1, E2 and E3). Requires (R)-lipoate as cofactor.

It carries out the reaction N(6)-[(R)-dihydrolipoyl]-L-lysyl-[protein] + succinyl-CoA = N(6)-[(R)-S(8)-succinyldihydrolipoyl]-L-lysyl-[protein] + CoA. Its pathway is amino-acid degradation; L-lysine degradation via saccharopine pathway; glutaryl-CoA from L-lysine: step 6/6. In terms of biological role, E2 component of the 2-oxoglutarate dehydrogenase (OGDH) complex which catalyzes the second step in the conversion of 2-oxoglutarate to succinyl-CoA and CO(2). In Bartonella vinsonii subsp. berkhoffii, this protein is Dihydrolipoyllysine-residue succinyltransferase component of 2-oxoglutarate dehydrogenase complex (sucB).